Reading from the N-terminus, the 90-residue chain is Small ribosomal subunit protein uS17 (90 aa).

Belongs to the universal ribosomal protein uS17 family. As to quaternary structure, part of the 30S ribosomal subunit.

Functionally, one of the primary rRNA binding proteins, it binds specifically to the 5'-end of 16S ribosomal RNA. The sequence is that of Small ribosomal subunit protein uS17 from Methylobacillus flagellatus (strain ATCC 51484 / DSM 6875 / VKM B-1610 / KT).